A 128-amino-acid chain; its full sequence is Spore germination protein 1/2/3-related protein (128 aa).

A signal peptide spans 1–26; that stretch reads MNIRNTLVLLVSTVLVLMSCSIGCYA. N-linked (GlcNAc...) asparagine glycosylation is found at asparagine 55 and asparagine 119.

It belongs to the Dictyostelium gerABC family.

The protein resides in the secreted. The sequence is that of Spore germination protein 1/2/3-related protein from Dictyostelium discoideum (Social amoeba).